Here is a 318-residue protein sequence, read N- to C-terminus: Transaldolase (318 aa).

Lys-132 (schiff-base intermediate with substrate) is an active-site residue.

It belongs to the transaldolase family. Type 1 subfamily. As to quaternary structure, homodimer.

The protein localises to the cytoplasm. The enzyme catalyses D-sedoheptulose 7-phosphate + D-glyceraldehyde 3-phosphate = D-erythrose 4-phosphate + beta-D-fructose 6-phosphate. Its pathway is carbohydrate degradation; pentose phosphate pathway; D-glyceraldehyde 3-phosphate and beta-D-fructose 6-phosphate from D-ribose 5-phosphate and D-xylulose 5-phosphate (non-oxidative stage): step 2/3. In terms of biological role, transaldolase is important for the balance of metabolites in the pentose-phosphate pathway. This chain is Transaldolase, found in Shewanella putrefaciens (strain CN-32 / ATCC BAA-453).